The sequence spans 114 residues: Nucleoid-associated protein THEYE_A1069 (114 aa).

The protein belongs to the YbaB/EbfC family. As to quaternary structure, homodimer.

The protein localises to the cytoplasm. It localises to the nucleoid. Functionally, binds to DNA and alters its conformation. May be involved in regulation of gene expression, nucleoid organization and DNA protection. The sequence is that of Nucleoid-associated protein THEYE_A1069 from Thermodesulfovibrio yellowstonii (strain ATCC 51303 / DSM 11347 / YP87).